The sequence spans 1141 residues: Myosin-binding protein C, slow-type (1141 aa).

Positions 1–10 are enriched in basic and acidic residues; that stretch reads MPEPTKKEEN. The tract at residues 1–51 is disordered; the sequence is MPEPTKKEENEVPAPAPPPEEPSKEKEAGTTPAKDWTLVETPPGEEQAKQN. 5 Ig-like C2-type domains span residues 72 to 144, 251 to 340, 341 to 431, 432 to 520, and 522 to 619; these read GEDI…RCEV, SAAF…VREP, PIMV…VDLK, PLKI…HVID, and PKII…VVDF. T406 is subject to Phosphothreonine. S611 is subject to Phosphoserine. Fibronectin type-III domains are found at residues 622–721 and 722–833; these read PPVA…TSPP and TLLT…VKEI. T798 carries the post-translational modification Phosphothreonine. Y823 bears the Phosphotyrosine mark. An Ig-like C2-type 6 domain is found at 837 to 931; the sequence is PKIRIPRHLK…ASIDIQIIDR (95 aa). In terms of domain architecture, Fibronectin type-III 3 spans 934–1029; it reads PPQIVKIEDV…TKESAVIARD (96 aa). Positions 1047–1141 constitute an Ig-like C2-type 7 domain; sequence PMFTQPLVNT…CKLEVKVIAQ (95 aa).

Belongs to the immunoglobulin superfamily. MyBP family. As to quaternary structure, interacts with USP25 (isoform USP25m only); the interaction prevents proteasomal degradation of MYBPC1.

Functionally, thick filament-associated protein located in the crossbridge region of vertebrate striated muscle a bands. Slow skeletal protein that binds to both myosin and actin. In vitro, binds to native thin filaments and modifies the activity of actin-activated myosin ATPase. May modulate muscle contraction or may play a more structural role. The protein is Myosin-binding protein C, slow-type (MYBPC1) of Homo sapiens (Human).